The following is a 165-amino-acid chain: Small ribosomal subunit protein bS16 (165 aa).

The disordered stretch occupies residues 84-165 (WTHGNNPEKG…EAPAEEAAEG (82 aa)). Positions 89-130 (NPEKGKPGKKAQERLAERAQREEERKQAEADAKAAAEAEKAA) are enriched in basic and acidic residues. Residues 131–157 (AAEAAAAAAAAPAVEEAPAEEAPAAEA) are compositionally biased toward low complexity.

This sequence belongs to the bacterial ribosomal protein bS16 family.

This chain is Small ribosomal subunit protein bS16, found in Caulobacter vibrioides (strain ATCC 19089 / CIP 103742 / CB 15) (Caulobacter crescentus).